A 122-amino-acid polypeptide reads, in one-letter code: Large ribosomal subunit protein uL18 (122 aa).

It belongs to the universal ribosomal protein uL18 family. In terms of assembly, part of the 50S ribosomal subunit; part of the 5S rRNA/L5/L18/L25 subcomplex. Contacts the 5S and 23S rRNAs.

Its function is as follows. This is one of the proteins that bind and probably mediate the attachment of the 5S RNA into the large ribosomal subunit, where it forms part of the central protuberance. This chain is Large ribosomal subunit protein uL18, found in Prochlorococcus marinus (strain MIT 9515).